Consider the following 78-residue polypeptide: Large ribosomal subunit protein bL28 (78 aa).

A disordered region spans residues 1–31 (MAAHCQVTGAEPGFGHSISHSHRRNKRRFDP).

The protein belongs to the bacterial ribosomal protein bL28 family.

This chain is Large ribosomal subunit protein bL28, found in Arthrobacter sp. (strain FB24).